We begin with the raw amino-acid sequence, 861 residues long: Oleate activated transcription factor 3 (861 aa).

A DNA-binding region (zn(2)-C6 fungal-type) is located at residues 19–47 (NCKKRKSKCDRTKPCGTCVRLGDVDSCVY). The segment covering 52–61 (SGQPESSPSL) has biased composition (polar residues). Residues 52-99 (SGQPESSPSLNDADPLRKQSTPAERISPGFIKKRRSSQTRQDEDHWQR) form a disordered region.

Belongs to the OAF3 family.

It is found in the cytoplasm. The protein localises to the nucleus. It localises to the mitochondrion. In terms of biological role, transcriptional inhibitor with a significantly increased number of target genes in response to oleate. The protein is Oleate activated transcription factor 3 (OAF3) of Saccharomyces cerevisiae (strain JAY291) (Baker's yeast).